Reading from the N-terminus, the 418-residue chain is Serine/threonine transporter SstT (418 aa).

Transmembrane regions (helical) follow at residues 21–41, 49–69, 83–103, 142–162, 190–210, 217–237, 299–319, and 331–351; these read ILIG…AAIA, FVGA…IASI, ILFL…VVSF, ALLN…GIAL, FAPL…GFGA, LLVV…PLIV, MAGA…TLGI, and VVAA…LLLI.

The protein belongs to the dicarboxylate/amino acid:cation symporter (DAACS) (TC 2.A.23) family.

The protein resides in the cell inner membrane. It catalyses the reaction L-serine(in) + Na(+)(in) = L-serine(out) + Na(+)(out). The catalysed reaction is L-threonine(in) + Na(+)(in) = L-threonine(out) + Na(+)(out). Involved in the import of serine and threonine into the cell, with the concomitant import of sodium (symport system). This Yersinia pseudotuberculosis serotype O:1b (strain IP 31758) protein is Serine/threonine transporter SstT.